The chain runs to 4621 residues: Dynein axonemal heavy chain 5 (4621 aa).

The stem stretch occupies residues 1-1938 (MFRIGRRQLW…MIHITDVAFI (1938 aa)). Coiled-coil stretches lie at residues 260 to 305 (WIKQ…DQLK) and 803 to 825 (LENA…DLIE). Residues 901–921 (VCHENASPSGNTSGRREGHSE) form a disordered region. 2 coiled-coil regions span residues 1065 to 1094 (AVKN…SINL) and 1433 to 1462 (DVNI…DWQA). 4 AAA regions span residues 1939 to 2161 (YQNE…VLRT), 2221 to 2440 (TAIS…IQNL), 2547 to 2800 (VYPP…IWQG), and 2913 to 3167 (LYNE…FRRS). ATP contacts are provided by residues 1977–1984 (GPAGTGKT) and 2259–2266 (GPSGSGKT). Residues 3182–3479 (YKFIYEEKHM…QTLLEDADRC (298 aa)) are stalk. 3 coiled-coil regions span residues 3186-3299 (YEEK…QTIK), 3423-3490 (LKAN…STLI), and 3729-3814 (ILTE…EEYR). 2 AAA regions span residues 3564–3794 (LIDA…EVTQ) and 4009–4223 (ARKY…FIQN). A coiled-coil region spans residues 4389 to 4417 (FLRQEIDRMQRVLSLVRSTLTELKLAVDG).

This sequence belongs to the dynein heavy chain family. In terms of assembly, interacts with DNAL1. Consists of at least two heavy chains and a number of intermediate and light chains. As to expression, strongly expressed in lung and kidney and weaker expression seen in brain, heart and testis. In the brain, expressed in ependymal cells lining the brain ventricles and the aqueduct.

The protein localises to the cytoplasm. The protein resides in the cytoskeleton. It localises to the cilium axoneme. Functionally, force generating protein of respiratory cilia. Produces force towards the minus ends of microtubules. Dynein has ATPase activity; the force-producing power stroke is thought to occur on release of ADP. Required for structural and functional integrity of the cilia of ependymal cells lining the brain ventricles. The chain is Dynein axonemal heavy chain 5 from Mus musculus (Mouse).